Consider the following 212-residue polypeptide: Cyclin-P4-1 (212 aa).

It belongs to the cyclin family. Cyclin U/P subfamily.

The protein is Cyclin-P4-1 (CYCP4-1) of Oryza sativa subsp. japonica (Rice).